Here is a 162-residue protein sequence, read N- to C-terminus: tRNA (cytidine(34)-2'-O)-methyltransferase (162 aa).

4 residues coordinate S-adenosyl-L-methionine: Leu83, Gly105, Ile127, and Ser135.

Belongs to the class IV-like SAM-binding methyltransferase superfamily. RNA methyltransferase TrmH family. TrmL subfamily. As to quaternary structure, homodimer.

Its subcellular location is the cytoplasm. It catalyses the reaction cytidine(34) in tRNA + S-adenosyl-L-methionine = 2'-O-methylcytidine(34) in tRNA + S-adenosyl-L-homocysteine + H(+). It carries out the reaction 5-carboxymethylaminomethyluridine(34) in tRNA(Leu) + S-adenosyl-L-methionine = 5-carboxymethylaminomethyl-2'-O-methyluridine(34) in tRNA(Leu) + S-adenosyl-L-homocysteine + H(+). Methylates the ribose at the nucleotide 34 wobble position in the two leucyl isoacceptors tRNA(Leu)(CmAA) and tRNA(Leu)(cmnm5UmAA). Catalyzes the methyl transfer from S-adenosyl-L-methionine to the 2'-OH of the wobble nucleotide. The sequence is that of tRNA (cytidine(34)-2'-O)-methyltransferase from Yersinia pestis.